Reading from the N-terminus, the 144-residue chain is Ribosomal RNA large subunit methyltransferase H (144 aa).

Residues Gly92 and 111–116 (LSPMTF) contribute to the S-adenosyl-L-methionine site.

It belongs to the RNA methyltransferase RlmH family. Homodimer.

The protein resides in the cytoplasm. It carries out the reaction pseudouridine(1915) in 23S rRNA + S-adenosyl-L-methionine = N(3)-methylpseudouridine(1915) in 23S rRNA + S-adenosyl-L-homocysteine + H(+). In terms of biological role, specifically methylates the pseudouridine at position 1915 (m3Psi1915) in 23S rRNA. The protein is Ribosomal RNA large subunit methyltransferase H of Synechococcus sp. (strain CC9311).